We begin with the raw amino-acid sequence, 207 residues long: MKLRGLYAITDSQLLAGKFLSYVEAALEGGVTLLQYRDKSSDEARRLREAEALRDLCERYKTQLIINDDAELAARLNVGVHLGQTDGPLSPTRALLGYKAIIGSTCHAQLELAEQAAREGASYVAFGRFFNSNTKPGAPSCSLDLLDEAKRTLHLPICAIGGITLDNAAPLVAHGVDLLAVVHGLFGANSTAEVTRRARAFNELLKV.

Residues 35–39 and N67 contribute to the 4-amino-2-methyl-5-(diphosphooxymethyl)pyrimidine site; that span reads QYRDK. D68 and D86 together coordinate Mg(2+). T105 serves as a coordination point for 4-amino-2-methyl-5-(diphosphooxymethyl)pyrimidine. A 2-[(2R,5Z)-2-carboxy-4-methylthiazol-5(2H)-ylidene]ethyl phosphate-binding site is contributed by 132 to 134; it reads SNT. K135 is a 4-amino-2-methyl-5-(diphosphooxymethyl)pyrimidine binding site. G162 serves as a coordination point for 2-[(2R,5Z)-2-carboxy-4-methylthiazol-5(2H)-ylidene]ethyl phosphate.

Belongs to the thiamine-phosphate synthase family. The cofactor is Mg(2+).

It catalyses the reaction 2-[(2R,5Z)-2-carboxy-4-methylthiazol-5(2H)-ylidene]ethyl phosphate + 4-amino-2-methyl-5-(diphosphooxymethyl)pyrimidine + 2 H(+) = thiamine phosphate + CO2 + diphosphate. The catalysed reaction is 2-(2-carboxy-4-methylthiazol-5-yl)ethyl phosphate + 4-amino-2-methyl-5-(diphosphooxymethyl)pyrimidine + 2 H(+) = thiamine phosphate + CO2 + diphosphate. The enzyme catalyses 4-methyl-5-(2-phosphooxyethyl)-thiazole + 4-amino-2-methyl-5-(diphosphooxymethyl)pyrimidine + H(+) = thiamine phosphate + diphosphate. The protein operates within cofactor biosynthesis; thiamine diphosphate biosynthesis; thiamine phosphate from 4-amino-2-methyl-5-diphosphomethylpyrimidine and 4-methyl-5-(2-phosphoethyl)-thiazole: step 1/1. In terms of biological role, condenses 4-methyl-5-(beta-hydroxyethyl)thiazole monophosphate (THZ-P) and 2-methyl-4-amino-5-hydroxymethyl pyrimidine pyrophosphate (HMP-PP) to form thiamine monophosphate (TMP). This is Thiamine-phosphate synthase from Pseudomonas fluorescens (strain Pf0-1).